The following is a 217-amino-acid chain: Pyrophosphatase PpaX (217 aa).

Asp11 functions as the Nucleophile in the catalytic mechanism.

Belongs to the HAD-like hydrolase superfamily. PpaX family. Mg(2+) is required as a cofactor.

The enzyme catalyses diphosphate + H2O = 2 phosphate + H(+). Hydrolyzes pyrophosphate formed during P-Ser-HPr dephosphorylation by HPrK/P. Might play a role in controlling the intracellular pyrophosphate pool. This Listeria innocua serovar 6a (strain ATCC BAA-680 / CLIP 11262) protein is Pyrophosphatase PpaX.